The chain runs to 123 residues: Small ribosomal subunit protein uS13 (123 aa).

Belongs to the universal ribosomal protein uS13 family. As to quaternary structure, part of the 30S ribosomal subunit. Forms a loose heterodimer with protein S19. Forms two bridges to the 50S subunit in the 70S ribosome.

In terms of biological role, located at the top of the head of the 30S subunit, it contacts several helices of the 16S rRNA. In the 70S ribosome it contacts the 23S rRNA (bridge B1a) and protein L5 of the 50S subunit (bridge B1b), connecting the 2 subunits; these bridges are implicated in subunit movement. Contacts the tRNAs in the A and P-sites. This chain is Small ribosomal subunit protein uS13, found in Anaplasma marginale (strain St. Maries).